Here is a 293-residue protein sequence, read N- to C-terminus: Energy-coupling factor transporter ATP-binding protein EcfA2 (293 aa).

An ABC transporter domain is found at 3–246 (ITFQKVEHRY…ADELEKIGVD (244 aa)). An ATP-binding site is contributed by 40–47 (GHTGSGKS).

The protein belongs to the ABC transporter superfamily. Energy-coupling factor EcfA family. As to quaternary structure, forms a stable energy-coupling factor (ECF) transporter complex composed of 2 membrane-embedded substrate-binding proteins (S component), 2 ATP-binding proteins (A component) and 2 transmembrane proteins (T component).

It localises to the cell membrane. Functionally, ATP-binding (A) component of a common energy-coupling factor (ECF) ABC-transporter complex. Unlike classic ABC transporters this ECF transporter provides the energy necessary to transport a number of different substrates. This Bacillus cereus (strain ZK / E33L) protein is Energy-coupling factor transporter ATP-binding protein EcfA2.